The primary structure comprises 681 residues: Pumilio domain-containing protein C6G9.14 (681 aa).

Disordered stretches follow at residues 180 to 210 (RPGL…PGLI) and 273 to 322 (ASTA…NVPS). Low complexity-rich tracts occupy residues 187-210 (TPGP…PGLI) and 273-286 (ASTA…SSGS). In terms of domain architecture, PUM-HD spans 319 to 659 (NVPSLISDDP…RILSKLERRH (341 aa)). 8 Pumilio repeats span residues 342-378 (SLQN…AVFA), 379-414 (ETHP…TFIQ), 415-451 (IIAP…CIVN), 452-487 (ALRP…FIFD), 488-523 (AICE…QLVE), 524-559 (HIVP…AIIS), 560-595 (YFLY…KLIS), and 596-633 (ELMD…ELVE). Basic and acidic residues predominate over residues 656 to 666 (ERRHPSSKEKP). The disordered stretch occupies residues 656–681 (ERRHPSSKEKPIVYSNSERVNTSSSA). Positions 669–681 (YSNSERVNTSSSA) are enriched in polar residues.

In Schizosaccharomyces pombe (strain 972 / ATCC 24843) (Fission yeast), this protein is Pumilio domain-containing protein C6G9.14.